A 27-amino-acid chain; its full sequence is Conotoxin flf14b (27 aa).

2 cysteine pairs are disulfide-bonded: C6–C26 and C10–C22.

As to expression, expressed by the venom duct.

Its subcellular location is the secreted. The chain is Conotoxin flf14b from Conus anabathrum floridanus (Florida cone).